The following is a 390-amino-acid chain: Methylthioribose-1-phosphate isomerase (390 aa).

D258 acts as the Proton donor in catalysis.

It belongs to the eIF-2B alpha/beta/delta subunits family. MtnA subfamily.

Its subcellular location is the cytoplasm. The protein resides in the nucleus. The enzyme catalyses 5-(methylsulfanyl)-alpha-D-ribose 1-phosphate = 5-(methylsulfanyl)-D-ribulose 1-phosphate. It participates in amino-acid biosynthesis; L-methionine biosynthesis via salvage pathway; L-methionine from S-methyl-5-thio-alpha-D-ribose 1-phosphate: step 1/6. Functionally, catalyzes the interconversion of methylthioribose-1-phosphate (MTR-1-P) into methylthioribulose-1-phosphate (MTRu-1-P). In Coccidioides posadasii (strain C735) (Valley fever fungus), this protein is Methylthioribose-1-phosphate isomerase.